Consider the following 293-residue polypeptide: NAD kinase (293 aa).

The Proton acceptor role is filled by aspartate 73. NAD(+) is bound by residues 73 to 74 (DG), 147 to 148 (NE), histidine 158, arginine 175, aspartate 177, 188 to 193 (TAYSLS), and glutamine 248.

Belongs to the NAD kinase family. Requires a divalent metal cation as cofactor.

It localises to the cytoplasm. It carries out the reaction NAD(+) + ATP = ADP + NADP(+) + H(+). In terms of biological role, involved in the regulation of the intracellular balance of NAD and NADP, and is a key enzyme in the biosynthesis of NADP. Catalyzes specifically the phosphorylation on 2'-hydroxyl of the adenosine moiety of NAD to yield NADP. This is NAD kinase from Photobacterium profundum (strain SS9).